The following is a 390-amino-acid chain: S-adenosylmethionine synthase 2 (390 aa).

Position 9 (E9) interacts with Mg(2+). H15 lines the ATP pocket. E43 is a binding site for K(+). Residues E56 and Q99 each contribute to the L-methionine site. ATP contacts are provided by residues 167 to 169, 235 to 238, D246, 252 to 253, A269, K273, and K277; these read DGK, SGRF, and RK. D246 is a binding site for L-methionine. K277 contributes to the L-methionine binding site.

The protein belongs to the AdoMet synthase family. In terms of assembly, homotetramer. Mn(2+) serves as cofactor. It depends on Mg(2+) as a cofactor. Requires Co(2+) as cofactor. The cofactor is K(+).

The protein resides in the cytoplasm. The enzyme catalyses L-methionine + ATP + H2O = S-adenosyl-L-methionine + phosphate + diphosphate. Its pathway is amino-acid biosynthesis; S-adenosyl-L-methionine biosynthesis; S-adenosyl-L-methionine from L-methionine: step 1/1. Catalyzes the formation of S-adenosylmethionine from methionine and ATP. The reaction comprises two steps that are both catalyzed by the same enzyme: formation of S-adenosylmethionine (AdoMet) and triphosphate, and subsequent hydrolysis of the triphosphate. This Nicotiana tabacum (Common tobacco) protein is S-adenosylmethionine synthase 2 (SAMS2).